A 198-amino-acid polypeptide reads, in one-letter code: Glycerol-3-phosphate acyltransferase (198 aa).

5 helical membrane-spanning segments follow: residues 2-22 (YAVL…AYIL), 48-70 (LGYK…AVLI), 75-97 (MGNT…PVFL), 111-131 (VVMT…VTVI), and 154-174 (IFWN…LAIF).

The protein belongs to the PlsY family. In terms of assembly, probably interacts with PlsX.

Its subcellular location is the cell membrane. The enzyme catalyses an acyl phosphate + sn-glycerol 3-phosphate = a 1-acyl-sn-glycero-3-phosphate + phosphate. The protein operates within lipid metabolism; phospholipid metabolism. In terms of biological role, catalyzes the transfer of an acyl group from acyl-phosphate (acyl-PO(4)) to glycerol-3-phosphate (G3P) to form lysophosphatidic acid (LPA). This enzyme utilizes acyl-phosphate as fatty acyl donor, but not acyl-CoA or acyl-ACP. The chain is Glycerol-3-phosphate acyltransferase from Thermoanaerobacter pseudethanolicus (strain ATCC 33223 / 39E) (Clostridium thermohydrosulfuricum).